Here is a 620-residue protein sequence, read N- to C-terminus: Glutathione-regulated potassium-efflux system protein KefC (620 aa).

12 helical membrane-spanning segments follow: residues 4–24 (HTLI…PIAV), 26–46 (LGLG…PWGL), 54–74 (SILH…GLEL), 90–110 (GALQ…LLGL), 114–134 (VAEL…MQAM), 149–169 (FAVL…IPLL), 178–198 (MGAF…VVLL), 218–238 (VFSA…EEVG), 270–290 (GLLL…GTLI), 294–314 (LRIV…LWLI), 327–347 (WFAV…GAAQ), and 359–379 (SLTL…VILN). Residues 399-518 (QPRVIIAGFG…AGVEKPERET (120 aa)) form the RCK N-terminal domain. The interval 597–620 (GWQGTEEGKHTGNMADEPETKPSS) is disordered.

The protein belongs to the monovalent cation:proton antiporter 2 (CPA2) transporter (TC 2.A.37) family. KefC subfamily. In terms of assembly, homodimer. Interacts with the regulatory subunit KefF.

Its subcellular location is the cell inner membrane. Its function is as follows. Pore-forming subunit of a potassium efflux system that confers protection against electrophiles. Catalyzes K(+)/H(+) antiport. The polypeptide is Glutathione-regulated potassium-efflux system protein KefC (Escherichia coli O17:K52:H18 (strain UMN026 / ExPEC)).